Here is a 448-residue protein sequence, read N- to C-terminus: tRNA modification GTPase MnmE (448 aa).

Residues arginine 24, glutamate 81, and lysine 120 each contribute to the (6S)-5-formyl-5,6,7,8-tetrahydrofolate site. In terms of domain architecture, TrmE-type G spans 216 to 373 (GLNVVLVGAP…LKRTLLCEAG (158 aa)). Asparagine 226 provides a ligand contact to K(+). GTP contacts are provided by residues 226–231 (NVGKSS), 245–251 (TDIAGTT), and 270–273 (DTAG). Residue serine 230 coordinates Mg(2+). K(+) is bound by residues threonine 245, isoleucine 247, and threonine 250. Mg(2+) is bound at residue threonine 251. Lysine 448 lines the (6S)-5-formyl-5,6,7,8-tetrahydrofolate pocket.

Belongs to the TRAFAC class TrmE-Era-EngA-EngB-Septin-like GTPase superfamily. TrmE GTPase family. In terms of assembly, homodimer. Heterotetramer of two MnmE and two MnmG subunits. The cofactor is K(+).

The protein localises to the cytoplasm. Exhibits a very high intrinsic GTPase hydrolysis rate. Involved in the addition of a carboxymethylaminomethyl (cmnm) group at the wobble position (U34) of certain tRNAs, forming tRNA-cmnm(5)s(2)U34. The chain is tRNA modification GTPase MnmE from Neisseria gonorrhoeae (strain ATCC 700825 / FA 1090).